Consider the following 119-residue polypeptide: MLYTGTDIIEIRRIKAAQARWGKRFLNRIFTPAELSLCKDRLPSLAARFAAKEAVIKALSLPKNQSYSEIETLNLPDGQPSVNLYGQALAKAITLGIKQISVSLSHCREYAIAMVVAQD.

Mg(2+)-binding residues include Asp7 and Glu53.

This sequence belongs to the P-Pant transferase superfamily. AcpS family. Mg(2+) serves as cofactor.

It localises to the cytoplasm. It catalyses the reaction apo-[ACP] + CoA = holo-[ACP] + adenosine 3',5'-bisphosphate + H(+). In terms of biological role, transfers the 4'-phosphopantetheine moiety from coenzyme A to a Ser of acyl-carrier-protein. This chain is Holo-[acyl-carrier-protein] synthase, found in Dehalococcoides mccartyi (strain ATCC BAA-2266 / KCTC 15142 / 195) (Dehalococcoides ethenogenes (strain 195)).